The chain runs to 163 residues: Calcium-binding protein 2 (163 aa).

A lipid anchor (N-myristoyl glycine) is attached at glycine 2. 4 consecutive EF-hand domains span residues 21–56, 72–89, 95–130, and 132–163; these read EEIE…LGYM, GKVD…KLLA, IGVR…LLGE, and LSQR…MMSR. 5 residues coordinate Ca(2+): aspartate 34, aspartate 36, aspartate 38, tyrosine 40, and glutamate 45. 9 residues coordinate Ca(2+): aspartate 108, asparagine 110, aspartate 112, cysteine 114, glutamate 119, aspartate 145, asparagine 147, aspartate 149, and glutamate 156.

Its subcellular location is the cytoplasm. The protein resides in the perinuclear region. It is found in the cell membrane. It localises to the golgi apparatus. Functionally, required for sound encoding at inner hair cells (IHCs) synapses, likely via inhibition of the inactivation of voltage-gated calcium channel of type 1.3 (Cav1.3) in the IHCs. Required for the normal transfer of light signals through the retina. This chain is Calcium-binding protein 2 (CABP2), found in Bos taurus (Bovine).